The primary structure comprises 467 residues: ATP synthase subunit beta (467 aa).

152-159 (GGAGVGKT) lines the ATP pocket.

The protein belongs to the ATPase alpha/beta chains family. In terms of assembly, F-type ATPases have 2 components, CF(1) - the catalytic core - and CF(0) - the membrane proton channel. CF(1) has five subunits: alpha(3), beta(3), gamma(1), delta(1), epsilon(1). CF(0) has three main subunits: a(1), b(2) and c(9-12). The alpha and beta chains form an alternating ring which encloses part of the gamma chain. CF(1) is attached to CF(0) by a central stalk formed by the gamma and epsilon chains, while a peripheral stalk is formed by the delta and b chains.

The protein localises to the cell membrane. The catalysed reaction is ATP + H2O + 4 H(+)(in) = ADP + phosphate + 5 H(+)(out). Functionally, produces ATP from ADP in the presence of a proton gradient across the membrane. The catalytic sites are hosted primarily by the beta subunits. In Caldicellulosiruptor bescii (strain ATCC BAA-1888 / DSM 6725 / KCTC 15123 / Z-1320) (Anaerocellum thermophilum), this protein is ATP synthase subunit beta.